A 338-amino-acid polypeptide reads, in one-letter code: Holliday junction branch migration complex subunit RuvB (338 aa).

The large ATPase domain (RuvB-L) stretch occupies residues 4 to 185 (EDQKILDAKP…FGIVAHMQFY (182 aa)). ATP contacts are provided by residues Leu24, Arg25, Gly66, Lys69, Thr70, Thr71, 132-134 (EDF), Arg175, Tyr185, and Arg222. Thr70 contacts Mg(2+). Positions 186-256 (PVSDLKLIAK…IVDNALNKLH (71 aa)) are small ATPAse domain (RuvB-S). Positions 259–338 (ARGLDETDLK…LQIPYQTGLS (80 aa)) are head domain (RuvB-H). DNA is bound by residues Arg314 and Arg319.

It belongs to the RuvB family. As to quaternary structure, homohexamer. Forms an RuvA(8)-RuvB(12)-Holliday junction (HJ) complex. HJ DNA is sandwiched between 2 RuvA tetramers; dsDNA enters through RuvA and exits via RuvB. An RuvB hexamer assembles on each DNA strand where it exits the tetramer. Each RuvB hexamer is contacted by two RuvA subunits (via domain III) on 2 adjacent RuvB subunits; this complex drives branch migration. In the full resolvosome a probable DNA-RuvA(4)-RuvB(12)-RuvC(2) complex forms which resolves the HJ.

It is found in the cytoplasm. The enzyme catalyses ATP + H2O = ADP + phosphate + H(+). Its function is as follows. The RuvA-RuvB-RuvC complex processes Holliday junction (HJ) DNA during genetic recombination and DNA repair, while the RuvA-RuvB complex plays an important role in the rescue of blocked DNA replication forks via replication fork reversal (RFR). RuvA specifically binds to HJ cruciform DNA, conferring on it an open structure. The RuvB hexamer acts as an ATP-dependent pump, pulling dsDNA into and through the RuvAB complex. RuvB forms 2 homohexamers on either side of HJ DNA bound by 1 or 2 RuvA tetramers; 4 subunits per hexamer contact DNA at a time. Coordinated motions by a converter formed by DNA-disengaged RuvB subunits stimulates ATP hydrolysis and nucleotide exchange. Immobilization of the converter enables RuvB to convert the ATP-contained energy into a lever motion, pulling 2 nucleotides of DNA out of the RuvA tetramer per ATP hydrolyzed, thus driving DNA branch migration. The RuvB motors rotate together with the DNA substrate, which together with the progressing nucleotide cycle form the mechanistic basis for DNA recombination by continuous HJ branch migration. Branch migration allows RuvC to scan DNA until it finds its consensus sequence, where it cleaves and resolves cruciform DNA. In Oenococcus oeni (strain ATCC BAA-331 / PSU-1), this protein is Holliday junction branch migration complex subunit RuvB.